The sequence spans 690 residues: Protein arginine N-methyltransferase 7 (690 aa).

SAM-dependent MTase PRMT-type domains are found at residues 14 to 357 (QNSW…YSLW) and 366 to 690 (TKSV…QKKL).

This sequence belongs to the class I-like SAM-binding methyltransferase superfamily. Protein arginine N-methyltransferase family. PRMT7 subfamily.

In terms of biological role, essential arginine methyltransferase that can both catalyze the formation of omega-N monomethylarginine (MMA) and symmetrical dimethylarginine (sDMA). Specifically mediates the symmetrical dimethylation of arginine residues in the small nuclear ribonucleoproteins SmD1 and SmD3. The sequence is that of Protein arginine N-methyltransferase 7 (Art7) from Drosophila sechellia (Fruit fly).